A 101-amino-acid polypeptide reads, in one-letter code: Large ribosomal subunit protein eL30 (101 aa).

This sequence belongs to the eukaryotic ribosomal protein eL30 family.

The chain is Large ribosomal subunit protein eL30 (rpl30e) from Thermococcus celer.